The chain runs to 147 residues: UPF0735 ACT domain-containing protein ABC1543 (147 aa).

In terms of domain architecture, ACT spans 70-145 (TFSINLADRS…SVERVELVGS (76 aa)).

This sequence belongs to the UPF0735 family.

The sequence is that of UPF0735 ACT domain-containing protein ABC1543 from Shouchella clausii (strain KSM-K16) (Alkalihalobacillus clausii).